A 565-amino-acid chain; its full sequence is MSTKLILSFSLCLMVLSCSAQLLPWRKGQRSRPHRGHQQFHHQCDVQRLTASEPSRRVRSEAGVTEIWDNDTPEFRCAGFVAVRVVIQPGGLLLPSYSNAPYITFVEQGRGVQGVVVPGCPETFQSESEFEYPQSQRDQRSRQSESEESSRGDQRTRQSESEEFSRGDQRTRQSESEEFSRGDQRTRQSESEEFSRGDQRTRQSESEEFSRGDQHQKIFRIRDGDVIPSPAGVVQWTHNDGDNDLISITLYDANSFQNQLDGNVRNFFLAGQSKQSREDRRSQRQTREEGSDRQSRESDDDEALLEANILTGFQDEILQEIFRNVDQETISKLRGDNDQRGFIVQARDLKLRVPEEYEEELQRERGDRKRGGSGRSNGLEQAFCNLKFKQNVNRPSRADVFNPRAGRINTVNSNNLPILEFIQLSAQHVVLYKNAILGPRWNLNAHSALYVTRGEGRVQVVGDEGRSVFDDNVQRGQILVVPQGFAVVLKAGREGLEWVELKNDDNAITSPIAGKTSVLRAIPVEVLANSYDISTKEAFRLKNGRQEVEVFLPFQSRDEKERERF.

The first 20 residues, 1-20, serve as a signal peptide directing secretion; sequence MSTKLILSFSLCLMVLSCSA. 2 cysteine pairs are disulfide-bonded: C44-C77 and C120-C384. The region spanning 49–331 is the Cupin type-1 1 domain; sequence LTASEPSRRV…FRNVDQETIS (283 aa). Disordered regions lie at residues 126 to 224, 271 to 301, and 356 to 376; these read SESE…IRDG, GQSK…SDDD, and EYEE…SGRS. Basic and acidic residues-rich tracts occupy residues 137 to 224, 275 to 297, and 356 to 370; these read RDQR…IRDG, QSRE…QSRE, and EYEE…DRKR. Residues 390 to 539 enclose the Cupin type-1 2 domain; the sequence is QNVNRPSRAD…SYDISTKEAF (150 aa).

It belongs to the 11S seed storage protein (globulins) family. Hexamer; each subunit is composed of an acidic and a basic chain derived from a single precursor and linked by a disulfide bond. Expressed only in immature seeds.

Seed storage protein. This Fagopyrum esculentum (Common buckwheat) protein is 13S globulin seed storage protein 1 (FA02).